A 147-amino-acid chain; its full sequence is Nucleoside diphosphate kinase (147 aa).

Lysine 11, phenylalanine 59, arginine 87, threonine 93, arginine 104, and asparagine 114 together coordinate ATP. The active-site Pros-phosphohistidine intermediate is histidine 117.

This sequence belongs to the NDK family. In terms of assembly, homotetramer. Mg(2+) serves as cofactor.

It localises to the cytoplasm. The enzyme catalyses a 2'-deoxyribonucleoside 5'-diphosphate + ATP = a 2'-deoxyribonucleoside 5'-triphosphate + ADP. It catalyses the reaction a ribonucleoside 5'-diphosphate + ATP = a ribonucleoside 5'-triphosphate + ADP. Functionally, major role in the synthesis of nucleoside triphosphates other than ATP. The ATP gamma phosphate is transferred to the NDP beta phosphate via a ping-pong mechanism, using a phosphorylated active-site intermediate. In Anaeromyxobacter sp. (strain K), this protein is Nucleoside diphosphate kinase.